The primary structure comprises 483 residues: Glutamyl-tRNA(Gln) amidotransferase subunit A (483 aa).

Residues Lys-77 and Ser-152 each act as charge relay system in the active site. Residue Ser-176 is the Acyl-ester intermediate of the active site.

The protein belongs to the amidase family. GatA subfamily. Heterotrimer of A, B and C subunits.

It carries out the reaction L-glutamyl-tRNA(Gln) + L-glutamine + ATP + H2O = L-glutaminyl-tRNA(Gln) + L-glutamate + ADP + phosphate + H(+). Its function is as follows. Allows the formation of correctly charged Gln-tRNA(Gln) through the transamidation of misacylated Glu-tRNA(Gln) in organisms which lack glutaminyl-tRNA synthetase. The reaction takes place in the presence of glutamine and ATP through an activated gamma-phospho-Glu-tRNA(Gln). This Listeria monocytogenes serotype 4b (strain F2365) protein is Glutamyl-tRNA(Gln) amidotransferase subunit A.